Reading from the N-terminus, the 449-residue chain is Tripartite motif-containing protein 64 (449 aa).

The RING-type zinc finger occupies 15–56; that stretch reads CCICVNYFIDPVTIDCGHSFCRPCLCLCSEEGRAPMRCPSCR. The segment at 87–128 adopts a B box-type zinc-finger fold; sequence SSDNICVLHEETKELFCEADKRLLCGPCSESPEHMAHSHSPI. The Zn(2+) site is built by C92, H95, C114, and H120. A coiled-coil region spans residues 189-225; that stretch reads LDEEEQRHLQALEREAEELFQQLQDSQVRMTQHLERM. The region spanning 269-449 is the B30.2/SPRY domain; the sequence is LTSWCITGVL…LRPFFCFGCT (181 aa).

This sequence belongs to the TRIM/RBCC family.

This is Tripartite motif-containing protein 64 (TRIM64) from Homo sapiens (Human).